Consider the following 950-residue polypeptide: Protein translocase subunit SecA (950 aa).

Residues Gln87, 105 to 109 (GEGKT), and Asp524 each bind ATP. The segment at 908-932 (GAAPVPAEARNPNDPSTWGKVGRNE) is disordered. Positions 934, 936, 945, and 946 each coordinate Zn(2+).

Belongs to the SecA family. Monomer and homodimer. Part of the essential Sec protein translocation apparatus which comprises SecA, SecYEG and auxiliary proteins SecDF-YajC and YidC. It depends on Zn(2+) as a cofactor.

The protein resides in the cell inner membrane. Its subcellular location is the cytoplasm. It carries out the reaction ATP + H2O + cellular proteinSide 1 = ADP + phosphate + cellular proteinSide 2.. Its function is as follows. Part of the Sec protein translocase complex. Interacts with the SecYEG preprotein conducting channel. Has a central role in coupling the hydrolysis of ATP to the transfer of proteins into and across the cell membrane, serving both as a receptor for the preprotein-SecB complex and as an ATP-driven molecular motor driving the stepwise translocation of polypeptide chains across the membrane. This is Protein translocase subunit SecA from Bradyrhizobium sp. (strain BTAi1 / ATCC BAA-1182).